Here is a 775-residue protein sequence, read N- to C-terminus: Beta-galactosidase 7 (775 aa).

Residues 1-17 (MRGGMAITAALVVVAAA) form the signal peptide. The active-site Proton donor is Glu185. Glu256 (nucleophile) is an active-site residue. 5 N-linked (GlcNAc...) asparagine glycosylation sites follow: Asn257, Asn266, Asn277, Asn358, and Asn602. An SUEL-type lectin domain is found at 689-775 (RGKVPKVRIW…KSLLVVADCR (87 aa)).

This sequence belongs to the glycosyl hydrolase 35 family.

The protein localises to the secreted. It localises to the extracellular space. It is found in the apoplast. The enzyme catalyses Hydrolysis of terminal non-reducing beta-D-galactose residues in beta-D-galactosides.. The polypeptide is Beta-galactosidase 7 (Oryza sativa subsp. japonica (Rice)).